The following is a 167-amino-acid chain: MVYCPYNKEHKMLRKKLQQHILKCRVIYKDTVELMVCPFNSSHLIPEPQFFQHTQSCEDRNIIVHYQTSAPAVLSEDTRHAKIESEENWDDDESVPDYDPQVYCSRANIVREPNGLFPAQRRAFIEQEKRRHFGEDYEEEKKPRKAKARADLRPTPYEHRRPYSRRQ.

2 CHHC U11-48K-type zinc fingers span residues 1 to 28 (MVYC…RVIY) and 34 to 61 (LMVC…EDRN). Positions 4, 10, 20, 24, 37, 43, 53, and 57 each coordinate Zn(2+). Residues 128–161 (EKRRHFGEDYEEEKKPRKAKARADLRPTPYEHRR) are compositionally biased toward basic and acidic residues. Positions 128–167 (EKRRHFGEDYEEEKKPRKAKARADLRPTPYEHRRPYSRRQ) are disordered.

Belongs to the UPF0224 (FAM112) family. In terms of assembly, interacts with piwi.

It localises to the nucleus. In terms of biological role, acts via the piwi-interacting RNA (piRNA) pathway which mediates the repression of transposable elements during meiosis by forming complexes composed of piRNAs and piwi proteins and governs the methylation and subsequent repression of transposons. Required for repression of transposons and neighboring genes in ovarian somatic and germline cells. This is Gametocyte-specific factor 1 homolog from Drosophila melanogaster (Fruit fly).